A 93-amino-acid chain; its full sequence is Small ribosomal subunit protein mS33 (93 aa).

This sequence belongs to the mitochondrion-specific ribosomal protein mS33 family. As to quaternary structure, component of the mitochondrial small ribosomal subunit (mt-SSU). Mature yeast 74S mitochondrial ribosomes consist of a small (37S) and a large (54S) subunit. The 37S small subunit contains a 15S ribosomal RNA (15S mt-rRNA) and at least 32 different proteins. The 54S large subunit contains a 21S rRNA (21S mt-rRNA) and at least 45 different proteins.

Its subcellular location is the mitochondrion. Component of the mitochondrial ribosome (mitoribosome), a dedicated translation machinery responsible for the synthesis of mitochondrial genome-encoded proteins, including at least some of the essential transmembrane subunits of the mitochondrial respiratory chain. The mitoribosomes are attached to the mitochondrial inner membrane and translation products are cotranslationally integrated into the membrane. This chain is Small ribosomal subunit protein mS33 (rsm27), found in Schizosaccharomyces pombe (strain 972 / ATCC 24843) (Fission yeast).